A 311-amino-acid polypeptide reads, in one-letter code: tRNA-cytidine(32) 2-sulfurtransferase (311 aa).

The PP-loop motif motif lies at 47–52; the sequence is SGGKDS. [4Fe-4S] cluster contacts are provided by cysteine 122, cysteine 125, and cysteine 213.

The protein belongs to the TtcA family. As to quaternary structure, homodimer. Mg(2+) is required as a cofactor. It depends on [4Fe-4S] cluster as a cofactor.

The protein resides in the cytoplasm. It catalyses the reaction cytidine(32) in tRNA + S-sulfanyl-L-cysteinyl-[cysteine desulfurase] + AH2 + ATP = 2-thiocytidine(32) in tRNA + L-cysteinyl-[cysteine desulfurase] + A + AMP + diphosphate + H(+). It participates in tRNA modification. Functionally, catalyzes the ATP-dependent 2-thiolation of cytidine in position 32 of tRNA, to form 2-thiocytidine (s(2)C32). The sulfur atoms are provided by the cysteine/cysteine desulfurase (IscS) system. This is tRNA-cytidine(32) 2-sulfurtransferase from Klebsiella pneumoniae (strain 342).